We begin with the raw amino-acid sequence, 254 residues long: Transmembrane protein 269 (254 aa).

Helical transmembrane passes span 44-64 (IINA…FCSF), 69-89 (YCAS…GTMT), 113-135 (LASA…IYVL), 171-191 (LTKG…LFMI), and 210-230 (IVYI…TAFY).

The protein localises to the membrane. In Mus musculus (Mouse), this protein is Transmembrane protein 269.